The following is a 794-amino-acid chain: Hyaluronan mediated motility receptor (794 aa).

The disordered stretch occupies residues 1–87 (MSFPKAPLKR…SQKNDKDVKR (87 aa)). The residue at position 20 (Ser-20) is a Phosphoserine. Residues 74-87 (SKKDSQKNDKDVKR) are compositionally biased toward basic and acidic residues. N-linked (GlcNAc...) asparagine glycosylation is found at Asn-134, Asn-279, Asn-446, Asn-467, Asn-488, Asn-509, Asn-530, Asn-561, and Asn-601. The tract at residues 365–630 (EEMTSEKNVF…ITDLKNQLRQ (266 aa)) is required for interaction with FAM83D. 5 consecutive repeat copies span residues 442–462 (QEKY…LESV), 463–483 (QEKY…LESE), 484–504 (QEKY…LESE), 505–525 (QEKY…LESV), and 526–546 (QEKY…LESY). The 5 X 21 AA tandem repeats stretch occupies residues 442–546 (QEKYNDTAQS…RDVTAQLESY (105 aa)). 2 hyaluronic acid-binding regions span residues 719–729 (KQKIKHVVKLK) and 741–750 (KLRSQLVKRK). Thr-784 is modified (phosphothreonine).

Interacts with ANKRD26. Interacts with DYNLL1. Interacts with FAM83D/CHICA. In terms of tissue distribution, ubiquitously expressed.

It localises to the cell surface. The protein resides in the cytoplasm. The protein localises to the cytoskeleton. It is found in the spindle. Its function is as follows. Receptor for hyaluronic acid (HA). Involved in cell motility. When hyaluronan binds to HMMR, the phosphorylation of a number of proteins, including the PTK2/FAK1 occurs. May also be involved in cellular transformation and metastasis formation, and in regulating extracellular-regulated kinase (ERK) activity. May act as a regulator of adipogenesis. The sequence is that of Hyaluronan mediated motility receptor (Hmmr) from Mus musculus (Mouse).